A 279-amino-acid chain; its full sequence is Tryptophan synthase alpha chain (279 aa).

Active-site proton acceptor residues include E63 and D74.

This sequence belongs to the TrpA family. In terms of assembly, tetramer of two alpha and two beta chains.

The catalysed reaction is (1S,2R)-1-C-(indol-3-yl)glycerol 3-phosphate + L-serine = D-glyceraldehyde 3-phosphate + L-tryptophan + H2O. It participates in amino-acid biosynthesis; L-tryptophan biosynthesis; L-tryptophan from chorismate: step 5/5. In terms of biological role, the alpha subunit is responsible for the aldol cleavage of indoleglycerol phosphate to indole and glyceraldehyde 3-phosphate. The chain is Tryptophan synthase alpha chain from Prochlorococcus marinus subsp. pastoris (strain CCMP1986 / NIES-2087 / MED4).